A 125-amino-acid polypeptide reads, in one-letter code: Large ribosomal subunit protein bL12 (125 aa).

It belongs to the bacterial ribosomal protein bL12 family. In terms of assembly, homodimer. Part of the ribosomal stalk of the 50S ribosomal subunit. Forms a multimeric L10(L12)X complex, where L10 forms an elongated spine to which 2 to 4 L12 dimers bind in a sequential fashion. Binds GTP-bound translation factors.

Forms part of the ribosomal stalk which helps the ribosome interact with GTP-bound translation factors. Is thus essential for accurate translation. This Campylobacter lari (strain RM2100 / D67 / ATCC BAA-1060) protein is Large ribosomal subunit protein bL12.